Here is a 246-residue protein sequence, read N- to C-terminus: MKILFSPSESKNENCVKNPINENSFIFKELFPYRMEALKHYEEFIKNASLQNLQELFGIKNENEIDKFKHDLKQAPTQEAILLYTGVSYEYLNFKALDKKSQAYILENTLIFSNLFGIVRANDTLPFYKFKQGAKIGNFAIEKFYKEHFSKALDEYLENEEILDLRAGFYDKFYTPKKKFYTYKFVKNGKVISHFAKAYRGILLSISAKNQVKNNKELLANLPSNLKLKEIQIKGLKEEIVLEILD.

This is an uncharacterized protein from Campylobacter jejuni subsp. jejuni serotype O:2 (strain ATCC 700819 / NCTC 11168).